The following is a 1046-amino-acid chain: UDP-N-acetylglucosamine--peptide N-acetylglucosaminyltransferase 110 kDa subunit (1046 aa).

Ala2 is modified (N-acetylalanine). Ser3 and Ser4 each carry phosphoserine; by GSK3-beta; alternate. Ser3 and Ser4 each carry an O-linked (GlcNAc) serine; alternate glycan. Residue Ser20 is modified to Phosphoserine. 12 TPR repeats span residues 21-54 (FQGLAELAHREYQAGDFEAAERHCMQLWRQEPDN), 89-122 (AEAYSNLGNVYKERGQLQEAIEHYRHALRLKPDF), 123-156 (IDGYINLAAALVAAGDMEGAVQAYVSALQYNPDL), 157-190 (YCVRSDLGNLLKALGRLEEAKACYLKAIETQPNF), 191-224 (AVAWSNLGCVFNAQGEIWLAIHHFEKAVTLDPNF), 225-258 (LDAYINLGNVLKEARIFDRAVAAYLRALSLSPNH), 259-292 (AVVHGNLACVYYEQGLIDLAIDTYRRAIELQPHF), 293-326 (PDAYCNLANALKEKGSVAEAEDCYNTALRLCPTH), 327-360 (ADSLNNLANIKREQGNIEEAVRLYRKALEVFPEF), 361-394 (AAAHSNLASVLQQQGKLQEALMHYKEAIRISPTF), 395-428 (ADAYSNMGNTLKEMQDVQGALQCYTRAIQINPAF), and 429-462 (ADAHSNLASIHKDSGNIPEAIASYRTALKLKPDF). O-linked (GlcNAc) serine; by autocatalysis glycosylation is present at Ser399. Thr454 carries the phosphothreonine modification. The TPR 13; truncated repeat unit spans residues 463 to 473 (PDAYCNLAHCL). Positions 464–466 (DAY) match the DFP motif motif. Positions 487-503 (KKLVSIVAEQLEKNRLP) match the Nuclear localization signal motif. His508 functions as the Proton acceptor in the catalytic mechanism. Residues Gln849, Lys852, 906–908 (APK), 911–914 (HVRR), 930–932 (HTT), and Asp935 contribute to the UDP site. Residue Tyr989 is modified to Phosphotyrosine. Residues 991–1010 (KKIRGKVWKQRISSPLFNTK) form a required for phosphatidylinositol 3,4,5-triphosphate binding region.

This sequence belongs to the glycosyltransferase 41 family. O-GlcNAc transferase subfamily. Monomer; may exist in different oligomerization states in cells. Homotrimer, oligomerizes via TPR repeats 6 and 7. Trimerization is not necessary for activity in vitro, however it increases affinity for UDP-GlcNAc. Component of a THAP1/THAP3-HCFC1-OGT complex. Component of the NSL complex at least composed of MOF/KAT8, KANSL1, KANSL2, KANSL3, MCRS1, PHF20, OGT1/OGT, WDR5 and HCFC1. Found in a complex with KIF5B, RHOT1, RHOT2 and TRAK1. Found in a complex composed of at least SINHCAF, SIN3A, HDAC1, SAP30, RBBP4, OGT and TET1. Component of a complex composed of KMT2E/MLL5, OGT and USP7; the complex stabilizes KMT2E/MLL5, preventing KMT2E/MLL5 ubiquitination and proteasomal-mediated degradation. Interacts (via TPRs 1-6) with SIN3A; the interaction mediates transcriptional repression in parallel with histone deacetylase. Interacts (via TPR 5-6) with TET1, TET2 and TET3. Interacts (via TPR repeats 6 and 7) with ATXN10. Interacts with NSD2. Interacts with PROSER1; this interaction mediates TET2 O-GlcNAcylation and stability by promoting the interaction between OGT and TET2. Post-translationally, ubiquitinated by the SCF(FBXO31) complex, leading to its proteasomal degradation. Phosphorylation on Ser-3 or Ser-4 by GSK3-beta positively regulates its activity. Phosphorylation at Thr-454 by AMPK promotes nuclear localization. In terms of processing, glycosylated via autocatalysis; O-GlcNAcylation at Ser-399 promotes nuclear localization.

The protein resides in the cytoplasm. Its subcellular location is the nucleus. It localises to the cell membrane. It is found in the mitochondrion membrane. The protein localises to the cell projection. The catalysed reaction is L-seryl-[protein] + UDP-N-acetyl-alpha-D-glucosamine = 3-O-(N-acetyl-beta-D-glucosaminyl)-L-seryl-[protein] + UDP + H(+). The enzyme catalyses L-threonyl-[protein] + UDP-N-acetyl-alpha-D-glucosamine = 3-O-(N-acetyl-beta-D-glucosaminyl)-L-threonyl-[protein] + UDP + H(+). It participates in protein modification; protein glycosylation. With respect to regulation, subject to product inhibition by UDP. In terms of biological role, catalyzes the transfer of a single N-acetylglucosamine from UDP-GlcNAc to a serine or threonine residue in cytoplasmic and nuclear proteins resulting in their modification with a beta-linked N-acetylglucosamine (O-GlcNAc). Glycosylates a large and diverse number of proteins including histone H2B, AKT1, AMPK, ATG4B, CAPRIN1, EZH2, FNIP1, GSDMD, KRT7, LMNA, LMNB1, LMNB2, RPTOR, HOXA1, PFKL, KMT2E/MLL5, MAPT/TAU, TET2, RBL2, RET, NOD2 and HCFC1. Can regulate their cellular processes via cross-talk between glycosylation and phosphorylation or by affecting proteolytic processing. Involved in insulin resistance in muscle and adipocyte cells via glycosylating insulin signaling components and inhibiting the 'Thr-308' phosphorylation of AKT1, enhancing IRS1 phosphorylation and attenuating insulin signaling. Involved in glycolysis regulation by mediating glycosylation of 6-phosphofructokinase PFKL, inhibiting its activity. Plays a key role in chromatin structure by mediating O-GlcNAcylation of 'Ser-112' of histone H2B: recruited to CpG-rich transcription start sites of active genes via its interaction with TET proteins (TET1, TET2 or TET3). As part of the NSL complex indirectly involved in acetylation of nucleosomal histone H4 on several lysine residues. O-GlcNAcylation of 'Ser-75' of EZH2 increases its stability, and facilitating the formation of H3K27me3 by the PRC2/EED-EZH2 complex. Stabilizes KMT2E/MLL5 by mediating its glycosylation, thereby preventing KMT2E/MLL5 ubiquitination. Regulates circadian oscillation of the clock genes and glucose homeostasis in the liver. Stabilizes clock proteins BMAL1 and CLOCK through O-glycosylation, which prevents their ubiquitination and subsequent degradation. Promotes the CLOCK-BMAL1-mediated transcription of genes in the negative loop of the circadian clock such as PER1/2 and CRY1/2. O-glycosylates HCFC1 and regulates its proteolytic processing and transcriptional activity. Component of a THAP1/THAP3-HCFC1-OGT complex that is required for the regulation of the transcriptional activity of RRM1. Regulates mitochondrial motility in neurons by mediating glycosylation of TRAK1. Promotes autophagy by mediating O-glycosylation of ATG4B. Acts as a regulator of mTORC1 signaling by mediating O-glycosylation of RPTOR and FNIP1: O-GlcNAcylation of RPTOR in response to glucose sufficiency promotes activation of the mTORC1 complex. This Mus musculus (Mouse) protein is UDP-N-acetylglucosamine--peptide N-acetylglucosaminyltransferase 110 kDa subunit (Ogt).